The primary structure comprises 30 residues: Trypsin inhibitor 6 (30 aa).

3 disulfide bridges follow: C4/C21, C11/C23, and C17/C29.

Belongs to the protease inhibitor I7 (squash-type serine protease inhibitor) family.

Its subcellular location is the secreted. Strongly inhibits trypsin, weakly inhibits chymotrypsin. This is Trypsin inhibitor 6 from Cyclanthera pedata (Achocha).